A 112-amino-acid chain; its full sequence is Small ribosomal subunit protein bS6 (112 aa).

Belongs to the bacterial ribosomal protein bS6 family.

Binds together with bS18 to 16S ribosomal RNA. In Chlamydia abortus (strain DSM 27085 / S26/3) (Chlamydophila abortus), this protein is Small ribosomal subunit protein bS6.